The sequence spans 510 residues: Probable cytosol aminopeptidase (510 aa).

Mn(2+) contacts are provided by K272 and D277. K284 is an active-site residue. Residues D296, D355, and E357 each contribute to the Mn(2+) site. R359 is a catalytic residue.

The protein belongs to the peptidase M17 family. Requires Mn(2+) as cofactor.

The protein resides in the cytoplasm. The enzyme catalyses Release of an N-terminal amino acid, Xaa-|-Yaa-, in which Xaa is preferably Leu, but may be other amino acids including Pro although not Arg or Lys, and Yaa may be Pro. Amino acid amides and methyl esters are also readily hydrolyzed, but rates on arylamides are exceedingly low.. It carries out the reaction Release of an N-terminal amino acid, preferentially leucine, but not glutamic or aspartic acids.. Functionally, presumably involved in the processing and regular turnover of intracellular proteins. Catalyzes the removal of unsubstituted N-terminal amino acids from various peptides. The sequence is that of Probable cytosol aminopeptidase from Synechococcus sp. (strain JA-3-3Ab) (Cyanobacteria bacterium Yellowstone A-Prime).